Consider the following 544-residue polypeptide: Prolyl 4-hydroxylase subunit alpha-3 (544 aa).

Positions 1 to 24 (MGPGARLAALLVLLKLGVGDPAAA) are cleaved as a signal peptide. The TPR repeat unit spans residues 227–260 (EDALDYLAFACYQVGNVSCALSLSREFLVYSPDN). An N-linked (GlcNAc...) asparagine glycan is attached at asparagine 242. Residues 422-529 (YAEYLQVVNY…KWVANKWIHE (108 aa)) form the Fe2OG dioxygenase domain. Residues histidine 440 and aspartate 442 each coordinate Fe cation. A glycan (N-linked (GlcNAc...) asparagine) is linked at asparagine 482. Histidine 510 serves as a coordination point for Fe cation. 2-oxoglutarate is bound at residue lysine 520.

The protein belongs to the P4HA family. In terms of assembly, heterotetramer of two alpha-3 chains and two beta chains (the beta chain is the multi-functional PDI). It depends on Fe(2+) as a cofactor. The cofactor is L-ascorbate. N-glycosylation plays no role in the catalytic activity.

Its subcellular location is the endoplasmic reticulum lumen. The catalysed reaction is L-prolyl-[collagen] + 2-oxoglutarate + O2 = trans-4-hydroxy-L-prolyl-[collagen] + succinate + CO2. In terms of biological role, catalyzes the post-translational formation of 4-hydroxyproline in -Xaa-Pro-Gly- sequences in collagens and other proteins. This is Prolyl 4-hydroxylase subunit alpha-3 (P4ha3) from Rattus norvegicus (Rat).